The following is a 446-amino-acid chain: UDP-N-acetylmuramoylalanine--D-glutamate ligase (446 aa).

An ATP-binding site is contributed by 116 to 122 (GSNGKTT).

The protein belongs to the MurCDEF family.

It localises to the cytoplasm. It catalyses the reaction UDP-N-acetyl-alpha-D-muramoyl-L-alanine + D-glutamate + ATP = UDP-N-acetyl-alpha-D-muramoyl-L-alanyl-D-glutamate + ADP + phosphate + H(+). It functions in the pathway cell wall biogenesis; peptidoglycan biosynthesis. Functionally, cell wall formation. Catalyzes the addition of glutamate to the nucleotide precursor UDP-N-acetylmuramoyl-L-alanine (UMA). The protein is UDP-N-acetylmuramoylalanine--D-glutamate ligase of Marinobacter nauticus (strain ATCC 700491 / DSM 11845 / VT8) (Marinobacter aquaeolei).